The sequence spans 231 residues: Ribosomal RNA small subunit methyltransferase nep-1 (231 aa).

S-adenosyl-L-methionine contacts are provided by residues M161, G188, G193, and 206 to 211 (ISNYPL).

Belongs to the class IV-like SAM-binding methyltransferase superfamily. RNA methyltransferase NEP1 family. Homodimer.

The protein resides in the nucleus. Its subcellular location is the nucleolus. It catalyses the reaction a pseudouridine in rRNA + S-adenosyl-L-methionine = an N(1)-methylpseudouridine in rRNA + S-adenosyl-L-homocysteine + H(+). S-adenosyl-L-methionine-dependent pseudouridine N(1)-methyltransferase that methylates a pseudouridine in 18S rRNA. Involved the biosynthesis of the hypermodified N1-methyl-N3-(3-amino-3-carboxypropyl) pseudouridine (m1acp3-Psi) conserved in eukaryotic 18S rRNA. Also has an essential role in 40S ribosomal subunit biogenesis independent on its methyltransferase activity, facilitating the incorporation of ribosomal protein S19 during the formation of pre-ribosomes. The chain is Ribosomal RNA small subunit methyltransferase nep-1 from Caenorhabditis elegans.